The sequence spans 184 residues: NADH-quinone oxidoreductase subunit B (184 aa).

Residues C63, C64, C128, and C158 each contribute to the [4Fe-4S] cluster site.

The protein belongs to the complex I 20 kDa subunit family. In terms of assembly, NDH-1 is composed of 14 different subunits. Subunits NuoB, C, D, E, F, and G constitute the peripheral sector of the complex. The cofactor is [4Fe-4S] cluster.

It localises to the cell inner membrane. It catalyses the reaction a quinone + NADH + 5 H(+)(in) = a quinol + NAD(+) + 4 H(+)(out). NDH-1 shuttles electrons from NADH, via FMN and iron-sulfur (Fe-S) centers, to quinones in the respiratory chain. The immediate electron acceptor for the enzyme in this species is believed to be ubiquinone. Couples the redox reaction to proton translocation (for every two electrons transferred, four hydrogen ions are translocated across the cytoplasmic membrane), and thus conserves the redox energy in a proton gradient. In Xanthomonas oryzae pv. oryzae (strain MAFF 311018), this protein is NADH-quinone oxidoreductase subunit B.